Reading from the N-terminus, the 264-residue chain is Short chain dehydrogenase/reductase dmxR18 (264 aa).

NADP(+) contacts are provided by Ile-24, Asp-70, Asn-97, and Arg-130. Catalysis depends on proton donor residues Ser-146 and Ser-147. Residues Tyr-161, Lys-165, and Thr-196 each contribute to the NADP(+) site. The active-site Proton acceptor is Tyr-161. The Lowers pKa of active site Tyr role is filled by Lys-165.

The protein belongs to the short-chain dehydrogenases/reductases (SDR) family.

It carries out the reaction 3,8,9,10-tetrahydroxy-6-methyl-1,4-dihydroanthracen-1-one + NADPH + H(+) = (3R)-3,8,9,10-tetrahydroxy-6-methyl-1,2,3,4-tetrahydroanthracen-1-one + NADP(+). It functions in the pathway secondary metabolite biosynthesis. In terms of biological role, short chain dehydrogenase/reductase; part of the gene cluster that mediates the biosynthesis of the dimeric xanthones cryptosporioptides. The pathway begins with the synthesis of atrochrysone thioester by the polyketide synthase dmx-nrPKS. The atrochrysone carboxyl ACP thioesterase dmxR1 then breaks the thioester bond and releases the atrochrysone carboxylic acid from dmx-nrPKS. Atrochrysone carboxylic acid is decarboxylated by the decarboxylase dmxR15, and oxidized by the anthrone oxygenase dmxR16 to yield emodin. Emodin is then reduced to emodin hydroquinone by the oxidoreductase dmxR7. A-ring reduction by the short chain dehydrogenase dmxR18, dehydration by the scytalone dehydratase-like protein dmxR17 and probable spontaneous re-oxidation, results in overall deoxygenation to chrysophanol. Baeyer-Villiger oxidation by the Baeyer-Villiger monooxygenase (BVMO) dmxR6 then yields monodictylactone in equilibrium with monodictyphenone. In the case of the cryptosporioptides biosynthesis, monodictylactone is reduced at C-12 to an alcohol (by the short chain dehydrogenases dmxR12 or dmxR8) and hydroxylated at C-5 by dmxR9, yielding the electron-rich aromatic which could eliminate H(2)O to form the ortho-quinonemethide, followed by tautomerisation to paraquinone and complete the formal reduction to produce the 10-methylgroup. Conjugate addition of C-4a-OH to the resulting paraquinone by the monooxygenase dmxR10 then gives cyclohexadienone, which is then reduced at C-5 by the short chain dehydrogenase dmxR3 to give the dihydroxanthone. The 6,7-epoxide in the cryptosporioptides could be introduced by the cytochrome P450 monooxygenase dmxL3. The highly reducing PKS dmxL2 manufactures butyrate, which is further carboxylated by dmxL1 to form ethylmalonate. It is not yet clear whether the carboxylation occurs while the butyrate is attached to the ACP of dmxL2, but this unusual fungal metabolite could then be esterified to O-5 by the O-acetyltransferase dmxR13. Finally, dimerization performed by dmxR5 gives the observed dimers cryptosporioptides A, B and C as the final products of the pathway. The polypeptide is Short chain dehydrogenase/reductase dmxR18 (Cryptosporiopsis sp. (strain 8999)).